The following is a 115-amino-acid chain: Large ribosomal subunit protein bL20c (115 aa).

This sequence belongs to the bacterial ribosomal protein bL20 family.

Its subcellular location is the plastid. It is found in the chloroplast. Its function is as follows. Binds directly to 23S ribosomal RNA and is necessary for the in vitro assembly process of the 50S ribosomal subunit. It is not involved in the protein synthesizing functions of that subunit. In Chlorella vulgaris (Green alga), this protein is Large ribosomal subunit protein bL20c (rpl20).